The primary structure comprises 97 residues: Putative CC-type chemokine U83 (97 aa).

2 disulfide bridges follow: Cys-32–Cys-62 and Cys-33–Cys-76.

The protein belongs to the intercrine beta (chemokine CC) family. Highly divergent.

The chain is Putative CC-type chemokine U83 (U83) from Homo sapiens (Human).